The following is a 282-amino-acid chain: MALKYYKPTTNGRRHMSSLDFGANLTTNKPEKSLLTILKKHSGRNSQGKITVRHQGGRHKRKYRLIDFKRNKDDITGIVKTIEYDPNRSANIALISYIDGEKRYILAPKNLKVGQKISSGPKSDILVGNALPLAKIPEGTFVHNIELKPGAGAKLIRSAGTWAQIQGRDENGKYVILKLKSGEYRRILATCRATIGVVGNEENSLVNIGKAGRNRHKGIRPTVRGSVMNPNDHPHGGGEGKQPIGRKSPLTPWGKKALGVKTRNPKKPSTKLIIRSRKETKK.

Residues 215 to 282 form a disordered region; that stretch reads RHKGIRPTVR…IIRSRKETKK (68 aa). Residues 263–282 show a composition bias toward basic residues; the sequence is RNPKKPSTKLIIRSRKETKK.

This sequence belongs to the universal ribosomal protein uL2 family. As to quaternary structure, part of the 50S ribosomal subunit. Forms a bridge to the 30S subunit in the 70S ribosome.

Functionally, one of the primary rRNA binding proteins. Required for association of the 30S and 50S subunits to form the 70S ribosome, for tRNA binding and peptide bond formation. It has been suggested to have peptidyltransferase activity; this is somewhat controversial. Makes several contacts with the 16S rRNA in the 70S ribosome. The polypeptide is Large ribosomal subunit protein uL2 (Mesomycoplasma hyopneumoniae (strain J / ATCC 25934 / NCTC 10110) (Mycoplasma hyopneumoniae)).